We begin with the raw amino-acid sequence, 75 residues long: MITSGVEPKDLAKRGESLIRQSSNRYLTTVRIAFRAKQRRFDDFDGLLEESSVKPVQRAIVELSDEQDQPDLLPG.

It belongs to the RNA polymerase subunit omega family. As to quaternary structure, in cyanobacteria the RNAP catalytic core is composed of 2 alpha, 1 beta, 1 beta', 1 gamma and 1 omega subunit. When a sigma factor is associated with the core the holoenzyme is formed, which can initiate transcription.

It carries out the reaction RNA(n) + a ribonucleoside 5'-triphosphate = RNA(n+1) + diphosphate. In terms of biological role, promotes RNA polymerase assembly. Latches the N- and C-terminal regions of the beta' subunit thereby facilitating its interaction with the beta and alpha subunits. This chain is DNA-directed RNA polymerase subunit omega, found in Prochlorococcus marinus (strain MIT 9313).